The primary structure comprises 258 residues: UPF0246 protein YaaA (258 aa).

The protein belongs to the UPF0246 family.

This Escherichia coli O8 (strain IAI1) protein is UPF0246 protein YaaA.